Here is a 117-residue protein sequence, read N- to C-terminus: Carboxysome shell protein CcmK4 (117 aa).

A BMC domain is found at 5-91 (AVGSLETKGF…PHENVECVLP (87 aa)).

Belongs to the bacterial microcompartments protein family. CcmK subfamily. Crystallizes as a homohexamer. Interacts stably with CcmK3, forming heterohexamers that can make dodecamers. Heterohexamers have a 1:2 CcmK3:CcmK4 stoichiometry. Upon expression in E.coli forms large aggregates.

It localises to the carboxysome. A probably essential, minor shell protein of the carboxysome, a polyhedral inclusion where RuBisCO (ribulose bisphosphate carboxylase, rbcL-rbcS) is sequestered. Hexamers form sheets that form the facets of the polyhedral carboxysome. In PCC 7418 there are several CcmK paralogs with presumably functional differences. This subunit can probably make both homohexamers and heterohexamers with CcmK3. Both hexamers can also make dodecamers, formation depends on buffer conditions. The sequence is that of Carboxysome shell protein CcmK4 from Halothece sp. (strain PCC 7418) (Synechococcus sp. (strain PCC 7418)).